Consider the following 216-residue polypeptide: GTP cyclohydrolase 1 (216 aa).

Residues Cys109, His112, and Cys180 each contribute to the Zn(2+) site.

The protein belongs to the GTP cyclohydrolase I family. As to quaternary structure, toroid-shaped homodecamer, composed of two pentamers of five dimers.

The catalysed reaction is GTP + H2O = 7,8-dihydroneopterin 3'-triphosphate + formate + H(+). It participates in cofactor biosynthesis; 7,8-dihydroneopterin triphosphate biosynthesis; 7,8-dihydroneopterin triphosphate from GTP: step 1/1. The polypeptide is GTP cyclohydrolase 1 (Wigglesworthia glossinidia brevipalpis).